The primary structure comprises 426 residues: Serine hydroxymethyltransferase (426 aa).

(6S)-5,6,7,8-tetrahydrofolate contacts are provided by residues Leu111 and 115–117; that span reads GHL. The residue at position 220 (Lys220) is an N6-(pyridoxal phosphate)lysine.

This sequence belongs to the SHMT family. In terms of assembly, homodimer. Pyridoxal 5'-phosphate serves as cofactor.

Its subcellular location is the cytoplasm. It carries out the reaction (6R)-5,10-methylene-5,6,7,8-tetrahydrofolate + glycine + H2O = (6S)-5,6,7,8-tetrahydrofolate + L-serine. It participates in one-carbon metabolism; tetrahydrofolate interconversion. It functions in the pathway amino-acid biosynthesis; glycine biosynthesis; glycine from L-serine: step 1/1. Catalyzes the reversible interconversion of serine and glycine with tetrahydrofolate (THF) serving as the one-carbon carrier. This reaction serves as the major source of one-carbon groups required for the biosynthesis of purines, thymidylate, methionine, and other important biomolecules. Also exhibits THF-independent aldolase activity toward beta-hydroxyamino acids, producing glycine and aldehydes, via a retro-aldol mechanism. The chain is Serine hydroxymethyltransferase from Orientia tsutsugamushi (strain Ikeda) (Rickettsia tsutsugamushi).